The chain runs to 156 residues: Small ribosomal subunit protein uS7 (156 aa).

This sequence belongs to the universal ribosomal protein uS7 family. Part of the 30S ribosomal subunit. Contacts proteins S9 and S11.

In terms of biological role, one of the primary rRNA binding proteins, it binds directly to 16S rRNA where it nucleates assembly of the head domain of the 30S subunit. Is located at the subunit interface close to the decoding center, probably blocks exit of the E-site tRNA. The polypeptide is Small ribosomal subunit protein uS7 (Ralstonia nicotianae (strain ATCC BAA-1114 / GMI1000) (Ralstonia solanacearum)).